The sequence spans 121 residues: UPF0102 protein VP0448 (121 aa).

Belongs to the UPF0102 family.

This chain is UPF0102 protein VP0448, found in Vibrio parahaemolyticus serotype O3:K6 (strain RIMD 2210633).